A 99-amino-acid chain; its full sequence is Large ribosomal subunit protein bL27 (99 aa).

Positions Met1 to Phe9 are excised as a propeptide.

This sequence belongs to the bacterial ribosomal protein bL27 family. In terms of processing, the N-terminus is cleaved by ribosomal processing cysteine protease Prp.

In Clostridium botulinum (strain Eklund 17B / Type B), this protein is Large ribosomal subunit protein bL27.